A 158-amino-acid polypeptide reads, in one-letter code: Auxin-responsive protein IAA31 (158 aa).

A compositionally biased stretch (low complexity) spans 1-40 (MEVSNSCSSFSSSSVDSTKPSPSESSVNLSLSLTFPSTSP). Residues 1 to 49 (MEVSNSCSSFSSSSVDSTKPSPSESSVNLSLSLTFPSTSPQREARQDWP) are disordered. The short motif at 29–33 (LSLSL) is the EAR-like (transcriptional repression) element. The region spanning 72 to 157 (SLFVKVYMEG…RRLKITRPER (86 aa)) is the PB1 domain.

Belongs to the Aux/IAA family. In terms of assembly, homodimers and heterodimers.

It localises to the nucleus. Its function is as follows. Aux/IAA proteins are short-lived transcriptional factors that function as repressors of early auxin response genes at low auxin concentrations. Repression is thought to result from the interaction with auxin response factors (ARFs), proteins that bind to the auxin-responsive promoter element (AuxRE). Formation of heterodimers with ARF proteins may alter their ability to modulate early auxin response genes expression. This is Auxin-responsive protein IAA31 (IAA31) from Arabidopsis thaliana (Mouse-ear cress).